We begin with the raw amino-acid sequence, 46 residues long: uncharacterized protein (46 aa).

This is an uncharacterized protein from Bacillus subtilis (strain 168).